The chain runs to 200 residues: Holliday junction branch migration complex subunit RuvA (200 aa).

The domain I stretch occupies residues 1–63; it reads MIGKLSGKID…EEHIHLYGFL (63 aa). The segment at 64–142 is domain II; sequence TLEEKNFFNL…KIFSSSAIIK (79 aa). The segment at 142–146 is flexible linker; the sequence is KDSSN. A domain III region spans residues 147–200; it reads ISSVEINEVIKALVNLGFTRFEAQNTVQGIITQNTKISIDELIKTALKNRNSSF.

The protein belongs to the RuvA family. As to quaternary structure, homotetramer. Forms an RuvA(8)-RuvB(12)-Holliday junction (HJ) complex. HJ DNA is sandwiched between 2 RuvA tetramers; dsDNA enters through RuvA and exits via RuvB. An RuvB hexamer assembles on each DNA strand where it exits the tetramer. Each RuvB hexamer is contacted by two RuvA subunits (via domain III) on 2 adjacent RuvB subunits; this complex drives branch migration. In the full resolvosome a probable DNA-RuvA(4)-RuvB(12)-RuvC(2) complex forms which resolves the HJ.

It is found in the cytoplasm. The RuvA-RuvB-RuvC complex processes Holliday junction (HJ) DNA during genetic recombination and DNA repair, while the RuvA-RuvB complex plays an important role in the rescue of blocked DNA replication forks via replication fork reversal (RFR). RuvA specifically binds to HJ cruciform DNA, conferring on it an open structure. The RuvB hexamer acts as an ATP-dependent pump, pulling dsDNA into and through the RuvAB complex. HJ branch migration allows RuvC to scan DNA until it finds its consensus sequence, where it cleaves and resolves the cruciform DNA. The polypeptide is Holliday junction branch migration complex subunit RuvA (Rickettsia typhi (strain ATCC VR-144 / Wilmington)).